A 51-amino-acid chain; its full sequence is Large ribosomal subunit protein bL33 (51 aa).

The protein belongs to the bacterial ribosomal protein bL33 family.

The protein is Large ribosomal subunit protein bL33 of Hahella chejuensis (strain KCTC 2396).